Here is a 337-residue protein sequence, read N- to C-terminus: HTH-type transcriptional repressor PurR (337 aa).

Residues 2-56 (ATIKDVAKLAAVSTTTVSHVINKTRFVAEATQKRVWEAVEELNYAPSAVARSLKC) form the HTH lacI-type domain. A DNA-binding region (H-T-H motif) is located at residues 4–23 (IKDVAKLAAVSTTTVSHVIN). The DNA-binding element occupies 48 to 56 (SAVARSLKC). Hypoxanthine is bound by residues Phe-73, Lys-189, Thr-191, Phe-220, and Asp-276.

In terms of assembly, homodimer.

It participates in purine metabolism; purine nucleotide biosynthesis [regulation]. Functionally, is the main repressor of the genes involved in the de novo synthesis of purine nucleotides, regulating purB, purC, purEK, purF, purHD, purL, purMN and guaBA expression. PurR is allosterically activated to bind its cognate DNA by binding the purine corepressors, hypoxanthine or guanine, thereby effecting transcription repression. This is HTH-type transcriptional repressor PurR from Aliivibrio fischeri (strain ATCC 700601 / ES114) (Vibrio fischeri).